Consider the following 38-residue polypeptide: Large ribosomal subunit protein bL36 (38 aa).

The protein belongs to the bacterial ribosomal protein bL36 family.

This Streptococcus pneumoniae serotype 4 (strain ATCC BAA-334 / TIGR4) protein is Large ribosomal subunit protein bL36 (rpmJ).